The primary structure comprises 3726 residues: Zinc finger homeobox protein 3 (3726 aa).

Disordered stretches follow at residues 1-79 (MEGC…SKEV) and 95-129 (MEHH…VENL). The segment at 79–103 (VSCNECSASFSSLQTYMEHHCPGTH) adopts a C2H2-type 1 zinc-finger fold. Residues 116–126 (TSEEGEEESDV) are compositionally biased toward acidic residues. The segment at 282-305 (LMCFLCKLSFGYVRSFVTHAVHDH) adopts a C2H2-type 2 zinc-finger fold. The segment at 417–557 (SVPLGPLASS…GPASTTSNSA (141 aa)) is disordered. Residue Ser-426 is modified to Phosphoserine. Position 428 is a phosphothreonine (Thr-428). Residues 431–459 (SEGKDSGAAEGDKQESGGHQDCFSEKVEP) are compositionally biased toward basic and acidic residues. Acidic residues-rich tracts occupy residues 460–491 (AEEE…EEEE) and 500–510 (DLEEELEDSPS). Residues 528-557 (SNPSISNSPLMPNVLQTLSRGPASTTSNSA) are compositionally biased toward polar residues. 2 positions are modified to phosphoserine: Ser-535 and Ser-573. The tract at residues 590–621 (DFADESANKDSATAPEPNESTEGDDGGFVPHH) is disordered. 3 consecutive C2H2-type zinc fingers follow at residues 641 to 664 (VECP…TMMH), 672 to 695 (LKCP…KEKH), and 727 to 751 (FRCE…SDKH). The C2H2-type 6; atypical zinc finger occupies 805–829 (WRCEVCDYETNVARNLRIHMTSEKH). A C2H2-type 7; degenerate zinc finger spans residues 946–969 (FQCAVCNKFTTDNLDMLGLHMNVE). A C2H2-type 8; atypical zinc finger spans residues 985-1009 (YQCKLCRYNTQLKANFQLHCKTDKH). The C2H2-type 9; atypical zinc-finger motif lies at 1041-1065 (LKCNACDYYTNSLEKLRLHTVNSRH). A C2H2-type 10; atypical zinc finger spans residues 1089 to 1113 (YHCVLCNYSTKAKLNLIQHVRSMKH). The disordered stretch occupies residues 1125–1228 (LQKGLPEEDE…KRPKASEEIK (104 aa)). Acidic residues predominate over residues 1149–1159 (DPEEPVEDAEG). 2 stretches are compositionally biased toward polar residues: residues 1175-1191 (GSGS…SSSQ) and 1199-1217 (SPAT…TPLS). Phosphoserine is present on Ser-1207. The C2H2-type 11; atypical zinc finger occupies 1233–1256 (YQCPYCKYSNADVNRLRVHAMTQH). The segment at 1262-1285 (LRCPLCQDMLNNKIHLQLHLTHLH) adopts a C2H2-type 12 zinc-finger fold. The disordered stretch occupies residues 1320 to 1361 (DGNSTLEEVGKQPEASEDPGKNILPPASMEHGGDLKPTSADP). 3 consecutive C2H2-type zinc fingers follow at residues 1370-1395 (FLCW…NEVH), 1411-1433 (YRCN…SQYH), and 1439-1462 (TMCC…ETSH). The disordered stretch occupies residues 1500 to 1539 (EEDKEEESDLEDKQSPTGSDSGSVQEDSGSEPKRALPFRK). A compositionally biased stretch (polar residues) spans 1514–1526 (SPTGSDSGSVQED). A C2H2-type 16 zinc finger spans residues 1555–1579 (YKCTVCKESFTQKNILLVHYNSVSH). Phosphoserine is present on Ser-1600. Residues 1606 to 1630 (FKCNTCNVAYSQSSTLEIHMRSVLH) form a C2H2-type 17 zinc finger. 3 disordered regions span residues 1639 to 1678 (LEAA…TATN), 1706 to 1738 (NPIS…QQQQ), and 1866 to 1943 (LSQS…PRIA). The span at 1643 to 1669 (SGNSNGTGNSGGVSLSSSTPSPVGSSG) shows a compositional bias: low complexity. A compositionally biased stretch (basic and acidic residues) spans 1717-1727 (EPKEANRKKLA). Positions 1866-1878 (LSQSHSALLQPSQ) are enriched in low complexity. The segment covering 1879–1902 (HPEKKNKVVIKEKDKESQREREGP) has biased composition (basic and acidic residues). The segment at 1990-2013 (LECDSCGKLFSNILILKSHQEHVH) adopts a C2H2-type 18 zinc-finger fold. Disordered regions lie at residues 2037–2089 (YPLR…AQPS) and 2211–2249 (NKDS…WGSK). Over residues 2041-2066 (PQTPEPPPPPPPPPPPPLPTAPPQPA) the composition is skewed to pro residues. Residues 2152–2211 (NKRPRTRITDDQLRVLRQYFDINNSPSEEQIKEMADKSGLPQKVIKHWFRNTLFKERQRN) constitute a DNA-binding region (homeobox 1). The segment covering 2214-2223 (SPYNFSNPPI) has biased composition (polar residues). Residues 2249–2308 (KRSSRTRFTDYQLRVLQDFFDANAYPKDDEFEQLSNLLNLPTRVIVVWFQNARQKARKNY) constitute a DNA-binding region (homeobox 2). A C2H2-type 19; atypical zinc finger spans residues 2335–2358 (YQCKKCSLVFQRIFDLIKHQKKLC). Residue Lys-2356 forms a Glycyl lysine isopeptide (Lys-Gly) (interchain with G-Cter in SUMO1) linkage. Disordered regions lie at residues 2383–2405 (TPTS…APSA) and 2429–2529 (NSKA…PQQL). A compositionally biased stretch (low complexity) spans 2458 to 2478 (QPKPEMQQQLEQLEQKTNAPQ). Over residues 2479–2507 (PKLPQPAAPSLPQPPPQAPPPQCPLPQSS) the composition is skewed to pro residues. The segment covering 2508-2521 (PSPSQLSHLPLKPL) has biased composition (low complexity). A C2H2-type 20 zinc finger spans residues 2539 to 2561 (YQCDQCKLAFPSFEHWQEHQQLH). Positions 2624–2626 (KRK) match the Nuclear localization signal motif. Residues 2628 to 2656 (EEKASASPGENDSGTGGEEPQRDKRLRTT) form a disordered region. Ser-2634 carries the phosphoserine modification. Residues 2650 to 2709 (DKRLRTTITPEQLEILYQKYLLDSNPTRKMLDHIAHEVGLKKRVVQVWFQNTRARERKGQ) constitute a DNA-binding region (homeobox 3). A C2H2-type 21 zinc finger spans residues 2720 to 2743 (RRCPFCRALFKAKTALEAHIRSRH). Polar residues predominate over residues 2780 to 2789 (SHLPPSSSDG). The interval 2780 to 2805 (SHLPPSSSDGQGVPLSPVSKTMELSP) is disordered. A phosphoserine mark is found at Ser-2795 and Ser-2804. A Glycyl lysine isopeptide (Lys-Gly) (interchain with G-Cter in SUMO1); alternate cross-link involves residue Lys-2815. Lys-2815 participates in a covalent cross-link: Glycyl lysine isopeptide (Lys-Gly) (interchain with G-Cter in SUMO2); alternate. Residues 2850–2877 (AITDTTTGDEGNADNDSATGIATETKSS) are disordered. Phosphoserine occurs at positions 2900 and 2904. The disordered stretch occupies residues 2920-2955 (VDYSETSSLADPCSPSPGASGSAGKSGDGGDRPGQK). The span at 2929–2944 (ADPCSPSPGASGSAGK) shows a compositional bias: low complexity. A DNA-binding region (homeobox 4) is located at residues 2952–3011 (PGQKRFRTQMTNLQLKVLKSCFNDYRTPTMLECEVLGNDIGLPKRVVQVWFQNARAKEKK). The C2H2-type 22 zinc finger occupies 3032 to 3056 (TECTLCGIKYSARLSVRDHIFSQQH). Disordered regions lie at residues 3145–3274 (FTPA…AGTG) and 3415–3476 (QQQQ…SASA). Polar residues predominate over residues 3147 to 3156 (PANTALTSPK). Residues 3181–3199 (PSSASLSSPTPAQATMAMA) show a composition bias toward low complexity. A compositionally biased stretch (pro residues) spans 3200–3221 (PQPPPQPQQPQPPVQQPPPPPA). The span at 3222 to 3234 (AQQIPAPQLTPQQ) shows a compositional bias: low complexity. The segment covering 3235–3267 (QRKDKDGEKGKEKEKAHKGKGEPLPVPKKEKGE) has biased composition (basic and acidic residues). Residue Lys-3262 forms a Glycyl lysine isopeptide (Lys-Gly) (interchain with G-Cter in SUMO1) linkage. Ser-3434 carries the phosphoserine modification. The segment covering 3435–3453 (PDKDPAKESPKPEEQKNVP) has biased composition (basic and acidic residues). Residue Ser-3457 is modified to Phosphoserine. The segment at 3552-3576 (YHCLACESALCGEEALSQHLESALH) adopts a C2H2-type 23 zinc-finger fold. A disordered region spans residues 3588 to 3726 (AKEHPSLLPH…TSVGTDTFRL (139 aa)). 2 stretches are compositionally biased toward low complexity: residues 3605–3618 (STAS…HSND) and 3645–3677 (SRAS…VQPS). At Ser-3616 the chain carries Phosphoserine. Position 3700 is a phosphoserine (Ser-3700). Residues 3715 to 3726 (GLTSVGTDTFRL) are compositionally biased toward polar residues.

Interacts with ALKBH4 and PIAS3. Interacts with FNBP3. Interacts with ESR1, RUNX3, TRIM25, SMAD2 and SMAD3. In terms of processing, phosphorylated at Ser-2634 in both embryonic and adult brain. Phosphorylation at Ser-1600, Ser-2795, Ser-2804, Ser-2900, Ser-3434, Ser-3616 and Ser-3700 is restricted to the embryonic brain. Hyperphosphorylation in embryonic brain protects ZFHX3 from calpain/CAPN1-mediated degradation. Post-translationally, ubiquitinated, leading to its proteasomal degradation. Nuclear localization is essential for its sumoylation. In terms of tissue distribution, expressed in suprachiasmatic nucleus (SCN) of the brain (at protein level). Expressed in skeletal muscle. Levels of expression are high in myoblasts but low in differentiated muscle. Expressed in the heart, primarily in the atria.

The protein localises to the nucleus. It is found in the cytoplasm. Transcriptional regulator which can act as an activator or a repressor. Inhibits the enhancer element of the AFP gene by binding to its AT-rich core sequence. In concert with SMAD-dependent TGF-beta signaling can repress the transcription of AFP via its interaction with SMAD2/3. Regulates the circadian locomotor rhythms via transcriptional activation of neuropeptidergic genes which are essential for intercellular synchrony and rhythm amplitude in the suprachiasmatic nucleus (SCN) of the brain. Regulator of myoblasts differentiation through the binding to the AT-rich sequence of MYF6 promoter and promoter repression. Down-regulates the MUC5AC promoter in gastric cancer. In association with RUNX3, up-regulates CDKN1A promoter activity following TGF-beta stimulation. In Mus musculus (Mouse), this protein is Zinc finger homeobox protein 3 (Zfhx3).